Here is a 1053-residue protein sequence, read N- to C-terminus: Carbamoyl phosphate synthase large chain (1053 aa).

Residues Met-1 to Asp-397 are carboxyphosphate synthetic domain. ATP-binding residues include Arg-127, Arg-167, Gly-173, Gly-174, Glu-206, Val-208, Glu-213, Gly-239, Ile-240, His-241, Gln-282, and Glu-294. Residues Arg-131–Ile-323 enclose the ATP-grasp 1 domain. Positions 282, 294, and 296 each coordinate Mg(2+). Mn(2+)-binding residues include Gln-282, Glu-294, and Asn-296. Positions Thr-398–Ile-530 are oligomerization domain. A carbamoyl phosphate synthetic domain region spans residues Val-531–Glu-919. In terms of domain architecture, ATP-grasp 2 spans Ser-661 to Ile-852. Residues Arg-697, Ser-736, Leu-738, Glu-743, Gly-768, Ile-769, His-770, Ser-771, Gln-811, and Glu-823 each coordinate ATP. Mg(2+)-binding residues include Gln-811, Glu-823, and Asn-825. 3 residues coordinate Mn(2+): Gln-811, Glu-823, and Asn-825. The MGS-like domain maps to Asn-918–Arg-1053. The tract at residues Leu-920–Arg-1053 is allosteric domain.

The protein belongs to the CarB family. As to quaternary structure, composed of two chains; the small (or glutamine) chain promotes the hydrolysis of glutamine to ammonia, which is used by the large (or ammonia) chain to synthesize carbamoyl phosphate. Tetramer of heterodimers (alpha,beta)4. Requires Mg(2+) as cofactor. The cofactor is Mn(2+).

The catalysed reaction is hydrogencarbonate + L-glutamine + 2 ATP + H2O = carbamoyl phosphate + L-glutamate + 2 ADP + phosphate + 2 H(+). It catalyses the reaction hydrogencarbonate + NH4(+) + 2 ATP = carbamoyl phosphate + 2 ADP + phosphate + 2 H(+). Its pathway is amino-acid biosynthesis; L-arginine biosynthesis; carbamoyl phosphate from bicarbonate: step 1/1. It functions in the pathway pyrimidine metabolism; UMP biosynthesis via de novo pathway; (S)-dihydroorotate from bicarbonate: step 1/3. Its function is as follows. Large subunit of the glutamine-dependent carbamoyl phosphate synthetase (CPSase). CPSase catalyzes the formation of carbamoyl phosphate from the ammonia moiety of glutamine, carbonate, and phosphate donated by ATP, constituting the first step of 2 biosynthetic pathways, one leading to arginine and/or urea and the other to pyrimidine nucleotides. The large subunit (synthetase) binds the substrates ammonia (free or transferred from glutamine from the small subunit), hydrogencarbonate and ATP and carries out an ATP-coupled ligase reaction, activating hydrogencarbonate by forming carboxy phosphate which reacts with ammonia to form carbamoyl phosphate. In Methanoregula boonei (strain DSM 21154 / JCM 14090 / 6A8), this protein is Carbamoyl phosphate synthase large chain.